We begin with the raw amino-acid sequence, 120 residues long: Large ribosomal subunit protein eL8 (120 aa).

This sequence belongs to the eukaryotic ribosomal protein eL8 family. Part of the 50S ribosomal subunit. Probably part of the RNase P complex.

Its subcellular location is the cytoplasm. In terms of biological role, multifunctional RNA-binding protein that recognizes the K-turn motif in ribosomal RNA, the RNA component of RNase P, box H/ACA, box C/D and box C'/D' sRNAs. The chain is Large ribosomal subunit protein eL8 from Methanosarcina mazei (strain ATCC BAA-159 / DSM 3647 / Goe1 / Go1 / JCM 11833 / OCM 88) (Methanosarcina frisia).